Reading from the N-terminus, the 285-residue chain is NAD kinase (285 aa).

D66 acts as the Proton acceptor in catalysis. NAD(+) contacts are provided by residues 66-67 (DG), 137-138 (ND), R148, R165, D167, and 178-183 (TAYSMS).

It belongs to the NAD kinase family. It depends on a divalent metal cation as a cofactor.

The protein resides in the cytoplasm. The catalysed reaction is NAD(+) + ATP = ADP + NADP(+) + H(+). Its function is as follows. Involved in the regulation of the intracellular balance of NAD and NADP, and is a key enzyme in the biosynthesis of NADP. Catalyzes specifically the phosphorylation on 2'-hydroxyl of the adenosine moiety of NAD to yield NADP. The polypeptide is NAD kinase (Chlorobium luteolum (strain DSM 273 / BCRC 81028 / 2530) (Pelodictyon luteolum)).